Here is a 520-residue protein sequence, read N- to C-terminus: Leucine carboxyl methyltransferase 1 (520 aa).

Disordered regions lie at residues 1–116 (MQRD…DDAV) and 142–174 (TQEF…SIRR). Low complexity predominate over residues 79–89 (PSLRLSLGLPR). Composition is skewed to polar residues over residues 95–110 (HSGQ…STAR) and 142–151 (TQEFSSTLPS). Residues arginine 185, glycine 210, aspartate 237, 305-306 (DV), and glutamate 343 contribute to the S-adenosyl-L-methionine site.

Belongs to the methyltransferase superfamily. LCMT family.

The enzyme catalyses [phosphatase 2A protein]-C-terminal L-leucine + S-adenosyl-L-methionine = [phosphatase 2A protein]-C-terminal L-leucine methyl ester + S-adenosyl-L-homocysteine. Methylates the carboxyl group of the C-terminal leucine residue of protein phosphatase 2A catalytic subunits to form alpha-leucine ester residues. The chain is Leucine carboxyl methyltransferase 1 (PPM1) from Mycosarcoma maydis (Corn smut fungus).